The following is a 276-amino-acid chain: Undecaprenyl-diphosphatase (276 aa).

8 helical membrane-spanning segments follow: residues Met1–Val21, Ala39–Phe59, Tyr84–Phe104, Leu115–Tyr135, Leu159–Gly179, Phe188–Ala208, Gln222–Leu242, and Phe253–Leu273.

It belongs to the UppP family.

It is found in the cell membrane. The catalysed reaction is di-trans,octa-cis-undecaprenyl diphosphate + H2O = di-trans,octa-cis-undecaprenyl phosphate + phosphate + H(+). In terms of biological role, catalyzes the dephosphorylation of undecaprenyl diphosphate (UPP). Confers resistance to bacitracin. The sequence is that of Undecaprenyl-diphosphatase from Mycolicibacterium smegmatis (strain ATCC 700084 / mc(2)155) (Mycobacterium smegmatis).